Consider the following 257-residue polypeptide: TLC domain-containing protein 3A (257 aa).

7 consecutive transmembrane segments (helical) span residues 1–21, 42–62, 77–97, 113–135, 142–162, 181–201, and 220–240; these read MLLT…LCTW, LVSS…IRSC, VWFL…CEWC, FLSR…VPVA, LGDF…FVSL, GILT…FMYW, and FYCN…FCLL. Residues 33-249 enclose the TLC domain; sequence TDCVMISTRL…LCRKAVRLFD (217 aa).

In terms of assembly, interacts with GGT7 isoform 3 and SLC3A2. As to expression, highly expressed in pancreas. Detected at intermediate levels in heart, placenta and kidney, and at low levels in brain, liver and skeletal muscle. Not detected in normal lung.

The protein resides in the cell membrane. The polypeptide is TLC domain-containing protein 3A (Homo sapiens (Human)).